Here is a 294-residue protein sequence, read N- to C-terminus: Histone deacetylase HDT3 (294 aa).

Methionine 1 bears the N-acetylmethionine mark. The interval 2-5 is required to repress transcription; the sequence is EFWG. The tract at residues 124–269 is disordered; the sequence is QVNFQLPNED…TPKSAGAFGC (146 aa). Residues 140–188 show a composition bias toward acidic residues; it reads DDADGSEEDSSDDDDSENSGDEEEEKVTAESDSEEDDSSDDEEDDSSEE. The segment covering 189–202 has biased composition (basic and acidic residues); it reads ETPKKPEEPKKRSA. The span at 203 to 213 shows a compositional bias: low complexity; it reads EPNSSKNPASN. Polar residues predominate over residues 252–262; the sequence is GETSKQQQTPK. The C2H2-type zinc finger occupies 267–290; sequence FGCKSCTRTFTSEMGLQSHTKAKH.

This sequence belongs to the histone deacetylase HD2 family. Interacts with DNMT2. In terms of tissue distribution, expressed in leaves, roots, stems, young plantlets, flowers and siliques. Highest levels in ovules, embryos, shoot apical meristems and first leaves. Also expressed in somatic embryos.

It localises to the nucleus. It is found in the nucleolus. In terms of biological role, probably mediates the deacetylation of lysine residues on the N-terminal part of the core histones (H2A, H2B, H3 and H4). Histone deacetylation gives a tag for epigenetic repression and plays an important role in transcriptional regulation, cell cycle progression and developmental events. Involved in the modulation of abscisic acid and stress-responsive genes. The polypeptide is Histone deacetylase HDT3 (HDT3) (Arabidopsis thaliana (Mouse-ear cress)).